Reading from the N-terminus, the 685-residue chain is Ubiquitin carboxyl-terminal hydrolase BAP1 (685 aa).

Residues 4-235 (GWLELESDPG…IRFNLMAVVP (232 aa)) enclose the UCH catalytic domain. Catalysis depends on cysteine 91, which acts as the Nucleophile. Catalysis depends on histidine 169, which acts as the Proton donor. Disordered regions lie at residues 273–325 (AQKP…RGPV), 363–425 (MQEE…PGVL), 440–493 (LSIK…SSPV), and 550–579 (KVSP…EVPQ). The segment covering 385 to 394 (DTDEEEEEET) has biased composition (acidic residues). The span at 450–493 (PHSQPSPTPSNESTDTASEIGSAFNSPLRSPLRSANPTRPSSPV) shows a compositional bias: polar residues. Basic and acidic residues predominate over residues 556–574 (NKVEEPRESSEPDTERSRV). Positions 626 to 654 (NYDEFICAFISMLAQEGMLASLVEQNISV) constitute a ULD domain. The disordered stretch occupies residues 659–685 (GVSIGRLHKQRKPDRRKRSRPYKAKRQ). Positions 673-678 (RRKRSR) match the Nuclear localization signal motif.

It belongs to the peptidase C12 family. BAP1 subfamily. As to quaternary structure, component of the PR-DUB complex.

Its subcellular location is the cytoplasm. It localises to the nucleus. It catalyses the reaction Thiol-dependent hydrolysis of ester, thioester, amide, peptide and isopeptide bonds formed by the C-terminal Gly of ubiquitin (a 76-residue protein attached to proteins as an intracellular targeting signal).. Deubiquitinating enzyme that plays a key role in chromatin by mediating deubiquitination of histone H2A. Catalytic component of the PR-DUB complex, a complex that specifically mediates deubiquitination of histone H2A monoubiquitinated at 'Lys-119' (H2AK119ub1). The sequence is that of Ubiquitin carboxyl-terminal hydrolase BAP1 (bap1) from Xenopus tropicalis (Western clawed frog).